Here is a 271-residue protein sequence, read N- to C-terminus: Coiled-coil domain-containing protein ORF29 (271 aa).

The segment at 1-39 (MNEKTESEIFEEQNSLYKPIKQEKKTPSTPESEDKNDQS) is disordered. Residues 20-37 (IKQEKKTPSTPESEDKND) show a composition bias toward basic and acidic residues. The stretch at 208-228 (RATQTQEILLNSLRKNLQMLE) forms a coiled coil.

This is Coiled-coil domain-containing protein ORF29 from Helicobacter pylori (strain 35A).